Consider the following 423-residue polypeptide: METRGIEQMFDFQRLPNDRFILLLLLLYAPVGFCLMLLRIFIGVHVFLVSCALPDSIVRRFIVRIMCSVLGLHVQQNSPRLRDKTTRLYVCNHVTHFDHNIINLLTSCNTPLLEGPVGFLCWARGFMELGQGVGSRTELTETLHRYCSSPDTLPLLLFPEEDTTNGRTGLLKFSSWPFSVSDSIQPVALLVKRPFIAVSTPESSWLTELLWTFFVPFTVYHVRWLPPLSKEDGETHQEFASKVQGLLATELGVISTQITKADKAEHIKRKRHSAPQTAHSNLGARPRTVAQGFLGTSVGAEDSRIARLAQQVKEVLPDVPVSVITRDLLQTNCVDTTITNLLERTDQFNSEAAMTMPSGPGKAAASSTPSAMVSSPNLKPAAKSFGRSPIDRHMSLQERKEALYEYARRRYIEKHGLNKEDDL.

The Cytoplasmic segment spans residues Met-1–Arg-19. The stretch at Phe-20–Ile-40 is an intramembrane region. Residues Phe-41–Leu-423 lie on the Cytoplasmic side of the membrane. One can recognise a CUE domain in the interval Arg-304–Asp-346. The tract at residues Thr-355 to Arg-392 is disordered. Residues Ala-365 to Asn-377 are compositionally biased toward polar residues.

It belongs to the AUP1 family.

It localises to the endoplasmic reticulum membrane. It is found in the lipid droplet. Functionally, plays a role in the translocation of terminally misfolded proteins from the endoplasmic reticulum lumen to the cytoplasm and their degradation by the proteasome. Plays a role in lipid droplet formation. Induces lipid droplet clustering. This is Lipid droplet-regulating VLDL assembly factor AUP1 from Danio rerio (Zebrafish).